The primary structure comprises 128 residues: Protein Wnt-10 (128 aa).

5 disulfides stabilise this stretch: Cys3–Cys17, Cys5–Cys12, Cys74–Cys105, Cys90–Cys100, and Cys127–Cys128. Residue Ser9 is the site of O-palmitoleoyl serine; by PORCN attachment. Asn91 is a glycosylation site (N-linked (GlcNAc...) asparagine).

The protein belongs to the Wnt family. Post-translationally, palmitoleoylation is required for efficient binding to frizzled receptors. Depalmitoleoylation leads to Wnt signaling pathway inhibition. In embryo, in dorsal hindbrain; in adults, in brain.

The protein resides in the secreted. It localises to the extracellular space. The protein localises to the extracellular matrix. In terms of biological role, ligand for members of the frizzled family of seven transmembrane receptors. Probable developmental protein. May be a signaling molecule which affects the development of discrete regions of tissues. Is likely to signal over only few cell diameters. This Xenopus laevis (African clawed frog) protein is Protein Wnt-10 (wnt10).